We begin with the raw amino-acid sequence, 412 residues long: Serine hydroxymethyltransferase (412 aa).

(6S)-5,6,7,8-tetrahydrofolate-binding positions include leucine 117 and 121 to 123 (GHL). Lysine 226 carries the N6-(pyridoxal phosphate)lysine modification.

The protein belongs to the SHMT family. In terms of assembly, homodimer. Pyridoxal 5'-phosphate serves as cofactor.

The protein resides in the cytoplasm. It carries out the reaction (6R)-5,10-methylene-5,6,7,8-tetrahydrofolate + glycine + H2O = (6S)-5,6,7,8-tetrahydrofolate + L-serine. It participates in one-carbon metabolism; tetrahydrofolate interconversion. Its pathway is amino-acid biosynthesis; glycine biosynthesis; glycine from L-serine: step 1/1. Functionally, catalyzes the reversible interconversion of serine and glycine with tetrahydrofolate (THF) serving as the one-carbon carrier. This reaction serves as the major source of one-carbon groups required for the biosynthesis of purines, thymidylate, methionine, and other important biomolecules. Also exhibits THF-independent aldolase activity toward beta-hydroxyamino acids, producing glycine and aldehydes, via a retro-aldol mechanism. The polypeptide is Serine hydroxymethyltransferase (Staphylococcus aureus (strain MW2)).